Reading from the N-terminus, the 245-residue chain is MRNLKMILEYDGTRYKGWQKQKKDVLTIQDKIETVLSKMTGEDIQVIGCGRTDAGVHAENYVANFHTNCDFTVDYMLDYLYEFLPEDIVVKTMKDTSERFHARYNVKSKTYVYRINNNKFRSVFNKKYAYHDNEKLNISAMKDAAEFLIGTHDFKSFTRLKSNSKSTIRAIKYINITENQGIISIEVNGNGFLLNMVRIVAGALLEVGKENIKPIDIEKMLNEKKRADASLILPAKGLCLKDIQY.

Catalysis depends on Asp-53, which acts as the Nucleophile. A substrate-binding site is contributed by Tyr-111.

Belongs to the tRNA pseudouridine synthase TruA family. Homodimer.

It carries out the reaction uridine(38/39/40) in tRNA = pseudouridine(38/39/40) in tRNA. Formation of pseudouridine at positions 38, 39 and 40 in the anticodon stem and loop of transfer RNAs. This Clostridium tetani (strain Massachusetts / E88) protein is tRNA pseudouridine synthase A 1.